The sequence spans 172 residues: Small ribosomal subunit protein uS5 (172 aa).

One can recognise an S5 DRBM domain in the interval 17–80 (LKEKMIQVNR…DAARRDMVKV (64 aa)).

This sequence belongs to the universal ribosomal protein uS5 family. In terms of assembly, part of the 30S ribosomal subunit. Contacts proteins S4 and S8.

Functionally, with S4 and S12 plays an important role in translational accuracy. Its function is as follows. Located at the back of the 30S subunit body where it stabilizes the conformation of the head with respect to the body. This chain is Small ribosomal subunit protein uS5, found in Methylibium petroleiphilum (strain ATCC BAA-1232 / LMG 22953 / PM1).